Consider the following 317-residue polypeptide: Ribonuclease Z (317 aa).

Residues histidine 63, histidine 65, aspartate 67, histidine 68, histidine 143, aspartate 213, and histidine 273 each contribute to the Zn(2+) site. Residue aspartate 67 is the Proton acceptor of the active site.

This sequence belongs to the RNase Z family. Homodimer. It depends on Zn(2+) as a cofactor.

It catalyses the reaction Endonucleolytic cleavage of RNA, removing extra 3' nucleotides from tRNA precursor, generating 3' termini of tRNAs. A 3'-hydroxy group is left at the tRNA terminus and a 5'-phosphoryl group is left at the trailer molecule.. Zinc phosphodiesterase, which displays some tRNA 3'-processing endonuclease activity. Probably involved in tRNA maturation, by removing a 3'-trailer from precursor tRNA. The polypeptide is Ribonuclease Z (Methanocaldococcus jannaschii (strain ATCC 43067 / DSM 2661 / JAL-1 / JCM 10045 / NBRC 100440) (Methanococcus jannaschii)).